Consider the following 356-residue polypeptide: L-Lys-D/L-Arg epimerase (356 aa).

Substrate-binding positions include Thr-135 and 160–162 (KVK). Asp-190, Glu-216, and Asp-241 together coordinate Mg(2+). Substrate-binding positions include Lys-266, Asp-296, and 319 to 321 (DLD).

This sequence belongs to the mandelate racemase/muconate lactonizing enzyme family. Requires Mg(2+) as cofactor.

In terms of biological role, catalyzes the epimerization of L-Lys-L-Arg to L-Lys-D-Arg. Can also catalyze the epimerization of other cationic dipeptides, such as L-Arg-L-Arg, L-Lys-L-Lys and L-Lys-L-His, but with lower efficiency (in vitro). This Methylococcus capsulatus (strain ATCC 33009 / NCIMB 11132 / Bath) protein is L-Lys-D/L-Arg epimerase.